The primary structure comprises 488 residues: Protein Notchless (488 aa).

The tract at residues 1-22 is disordered; it reads MLAKKQKMQETDTEQEATPHTI. Positions 19–101 are ubiquitin-like (UBL) domain; sequence PHTIQARLVS…VIDIVYQPQA (83 aa). 8 WD repeats span residues 117-156, 159-198, 202-246, 249-287, 329-370, 373-412, 415-454, and 457-488; these read GHAE…PHFT, GHKQ…QKGR, GHKK…CLMN, GHTN…LCRT, LQES…CVER, GHQN…YMAT, GHVQ…LAQE, and GHAD…LWAY.

It belongs to the NLE1/RSA4 family. Interacts with Notch (via cytoplasmic domain). Associates with the pre-60S ribosomal particle.

It localises to the nucleus. The protein localises to the nucleolus. Functionally, plays a role in regulating Notch activity. The sequence is that of Protein Notchless from Drosophila melanogaster (Fruit fly).